We begin with the raw amino-acid sequence, 412 residues long: Divalent metal cation transporter MntH (412 aa).

Residues 1–19 (MTNYRVESSSGRAARKTRL) are Cytoplasmic-facing. The chain crosses the membrane as a helical span at residues 20–39 (ALMGPAFIAAIGYIDPGNFA). The Periplasmic segment spans residues 40–51 (TNIQAGASFGYQ). Residues 52–71 (LLWVVVWANLMAMLIQILSA) traverse the membrane as a helical segment. At 72 to 95 (KLGIATGKNLAEQIRDHYPRPVVW) the chain is on the cytoplasmic side. Residues 96 to 118 (FYWVQAEIIAMATDLAEFIGAAI) traverse the membrane as a helical segment. Over 119–125 (GFKLILG) the chain is Periplasmic. A helical membrane pass occupies residues 126–145 (VSLLQGAVLTGIATFLILML). At 146–155 (QRRGQKPLEK) the chain is on the cytoplasmic side. The helical transmembrane segment at 156 to 175 (VIGGLLLFVAAAYIVELIFS) threads the bilayer. The Periplasmic segment spans residues 176–196 (QPNLAQLGKGMVIPSLPTSEA). The chain crosses the membrane as a helical span at residues 197-220 (VFLAAGVLGATIMPHVIYLHSSLT). At 221 to 238 (QHLHGGSRQQRYSATKWD) the chain is on the cytoplasmic side. The helical transmembrane segment at 239–258 (VAIAMTIAGFVNLAMMATAA) threads the bilayer. The Periplasmic portion of the chain corresponds to 259-276 (AAFHFSGHTGVADLDEAY). The helical transmembrane segment at 277 to 297 (LTLQPLLSHAAATVFGLSLVA) threads the bilayer. The Cytoplasmic portion of the chain corresponds to 298-327 (AGLSSTVVGTLAGQVVMQGFIRFHIPLWVR). The helical transmembrane segment at 328-344 (RTVTMLPSFIVILMGLD) threads the bilayer. Over 345–350 (PTRILV) the chain is Periplasmic. Residues 351-370 (MSQVLLSFGIALALVPLLIF) form a helical membrane-spanning segment. Topologically, residues 371–387 (TSDSKLMGDLVNSKRVK) are cytoplasmic. Residues 388-406 (QTGWVIVVLVVALNIWLLV) form a helical membrane-spanning segment. Residues 407–412 (GTALGL) are Periplasmic-facing.

It belongs to the NRAMP family.

It is found in the cell inner membrane. Functionally, h(+)-stimulated, divalent metal cation uptake system. The protein is Divalent metal cation transporter MntH of Escherichia coli O9:H4 (strain HS).